Here is a 200-residue protein sequence, read N- to C-terminus: dTTP/UTP pyrophosphatase (200 aa).

The active-site Proton acceptor is aspartate 73.

It belongs to the Maf family. YhdE subfamily. Requires a divalent metal cation as cofactor.

It localises to the cytoplasm. It catalyses the reaction dTTP + H2O = dTMP + diphosphate + H(+). The catalysed reaction is UTP + H2O = UMP + diphosphate + H(+). Functionally, nucleoside triphosphate pyrophosphatase that hydrolyzes dTTP and UTP. May have a dual role in cell division arrest and in preventing the incorporation of modified nucleotides into cellular nucleic acids. This is dTTP/UTP pyrophosphatase from Chromohalobacter salexigens (strain ATCC BAA-138 / DSM 3043 / CIP 106854 / NCIMB 13768 / 1H11).